The chain runs to 492 residues: Proline--tRNA ligase (492 aa).

This sequence belongs to the class-II aminoacyl-tRNA synthetase family. ProS type 3 subfamily. Homodimer.

The protein resides in the cytoplasm. It carries out the reaction tRNA(Pro) + L-proline + ATP = L-prolyl-tRNA(Pro) + AMP + diphosphate. Functionally, catalyzes the attachment of proline to tRNA(Pro) in a two-step reaction: proline is first activated by ATP to form Pro-AMP and then transferred to the acceptor end of tRNA(Pro). This is Proline--tRNA ligase from Christiangramia forsetii (strain DSM 17595 / CGMCC 1.15422 / KT0803) (Gramella forsetii).